Reading from the N-terminus, the 116-residue chain is Iron-sulfur cluster insertion protein ErpA (116 aa).

The iron-sulfur cluster site is built by Cys44, Cys108, and Cys110.

Belongs to the HesB/IscA family. As to quaternary structure, homodimer. The cofactor is iron-sulfur cluster.

Required for insertion of 4Fe-4S clusters for at least IspG. The protein is Iron-sulfur cluster insertion protein ErpA of Ectopseudomonas mendocina (strain ymp) (Pseudomonas mendocina).